The primary structure comprises 490 residues: Pyridine nucleotide-disulfide oxidoreductase domain-containing protein 1 (490 aa).

It belongs to the class-I pyridine nucleotide-disulfide oxidoreductase family. PYROXD1 subfamily. It depends on FAD as a cofactor.

The protein localises to the nucleus. Its subcellular location is the cytoplasm. It is found in the myofibril. The protein resides in the sarcomere. In terms of biological role, probable FAD-dependent oxidoreductase; involved in the cellular oxidative stress response. Required for normal sarcomere structure and muscle fiber integrity. The chain is Pyridine nucleotide-disulfide oxidoreductase domain-containing protein 1 (pyroxd1) from Danio rerio (Zebrafish).